The chain runs to 431 residues: Levansucrase Lscbeta (431 aa).

Residues Trp61, Asp62, Ala148, Arg218, and Asp219 each coordinate sucrose. The Nucleophile role is filled by Asp62. Glu303 acts as the Proton donor/acceptor in catalysis.

This sequence belongs to the glycosyl hydrolase 68 family. As to quaternary structure, homodimer.

It catalyses the reaction [6)-beta-D-fructofuranosyl-(2-&gt;](n) alpha-D-glucopyranoside + sucrose = [6)-beta-D-fructofuranosyl-(2-&gt;](n+1) alpha-D-glucopyranoside + D-glucose. Its activity is regulated as follows. Sucrose hydrolase activity is negatively affected by salt concentration. The levan polymerization rate is constant regardless of sucrose concentration. Catalyzes the synthesis of levan, a fructose polymer, by transferring the fructosyl moiety from sucrose to a growing acceptor molecule. Also displays sucrose hydrolase activity. This is Levansucrase Lscbeta from Pseudomonas syringae pv. actinidiae.